The following is a 211-amino-acid chain: Thiamine-phosphate synthase (211 aa).

Residues Gln-37 to Lys-41 and Asn-69 contribute to the 4-amino-2-methyl-5-(diphosphooxymethyl)pyrimidine site. Mg(2+)-binding residues include Asp-70 and Asp-89. A 4-amino-2-methyl-5-(diphosphooxymethyl)pyrimidine-binding site is contributed by Ser-108. Thr-134–Thr-136 provides a ligand contact to 2-[(2R,5Z)-2-carboxy-4-methylthiazol-5(2H)-ylidene]ethyl phosphate. Residue Lys-137 participates in 4-amino-2-methyl-5-(diphosphooxymethyl)pyrimidine binding. 2-[(2R,5Z)-2-carboxy-4-methylthiazol-5(2H)-ylidene]ethyl phosphate-binding positions include Gly-166 and Val-186 to Ser-187.

The protein belongs to the thiamine-phosphate synthase family. Mg(2+) serves as cofactor.

The catalysed reaction is 2-[(2R,5Z)-2-carboxy-4-methylthiazol-5(2H)-ylidene]ethyl phosphate + 4-amino-2-methyl-5-(diphosphooxymethyl)pyrimidine + 2 H(+) = thiamine phosphate + CO2 + diphosphate. It carries out the reaction 2-(2-carboxy-4-methylthiazol-5-yl)ethyl phosphate + 4-amino-2-methyl-5-(diphosphooxymethyl)pyrimidine + 2 H(+) = thiamine phosphate + CO2 + diphosphate. The enzyme catalyses 4-methyl-5-(2-phosphooxyethyl)-thiazole + 4-amino-2-methyl-5-(diphosphooxymethyl)pyrimidine + H(+) = thiamine phosphate + diphosphate. It participates in cofactor biosynthesis; thiamine diphosphate biosynthesis; thiamine phosphate from 4-amino-2-methyl-5-diphosphomethylpyrimidine and 4-methyl-5-(2-phosphoethyl)-thiazole: step 1/1. Its function is as follows. Condenses 4-methyl-5-(beta-hydroxyethyl)thiazole monophosphate (THZ-P) and 2-methyl-4-amino-5-hydroxymethyl pyrimidine pyrophosphate (HMP-PP) to form thiamine monophosphate (TMP). The sequence is that of Thiamine-phosphate synthase from Shigella sonnei (strain Ss046).